The primary structure comprises 373 residues: Cystathionine gamma-synthase/O-acetylhomoserine (thiol)-lyase (373 aa).

An N6-(pyridoxal phosphate)lysine modification is found at K197.

Belongs to the trans-sulfuration enzymes family. Homotetramer. The cofactor is pyridoxal 5'-phosphate.

The protein localises to the cytoplasm. The enzyme catalyses O-acetyl-L-homoserine + L-cysteine = L,L-cystathionine + acetate + H(+). The catalysed reaction is O-acetyl-L-homoserine + hydrogen sulfide = L-homocysteine + acetate. It functions in the pathway amino-acid biosynthesis; L-methionine biosynthesis via de novo pathway. Functionally, catalyzes the formation of L-cystathionine from O-acetyl-L-homoserine and L-cysteine. Cannot use O-succinyl-L-homoserine as substrate. Also exhibits O-acetylhomoserine thiolyase activity, catalyzing the synthesis of L-homocysteine from O-acetyl-L-homoserine and sulfide. The polypeptide is Cystathionine gamma-synthase/O-acetylhomoserine (thiol)-lyase (metI) (Bacillus subtilis (strain 168)).